Reading from the N-terminus, the 261-residue chain is Small ribosomal subunit protein eS4 (261 aa).

The region spanning leucine 42–aspartate 100 is the S4 RNA-binding domain.

The protein belongs to the eukaryotic ribosomal protein eS4 family.

The protein resides in the cytoplasm. The protein is Small ribosomal subunit protein eS4 (RPS4) of Prunus armeniaca (Apricot).